The primary structure comprises 324 residues: PGR5-like protein 1A, chloroplastic (324 aa).

The N-terminal 60 residues, 1–60 (MGSKMLFSLTSPRLFSAVSRKPSSSFSPSPPSPSSRTQWTQLSPGKSISLRRRVFLLPAK), are a transit peptide targeting the chloroplast. A disordered region spans residues 16–42 (SAVSRKPSSSFSPSPPSPSSRTQWTQL). The Stromal segment spans residues 61-198 (ATTEQSGPVG…KVYSDLAVDY (138 aa)). Cysteines 82 and 183 form a disulfide. A helical transmembrane segment spans residues 199–219 (FKMLLLNVPATVVALGLFFFL). At 220 to 236 (DDITGFEITYIMELPEP) the chain is on the lumenal, thylakoid side. A helical transmembrane segment spans residues 237–257 (YSFIFTWFAAVPVIVYLALSI). Residues 258-324 (TKLIIKDFLI…LITLPEGSQA (67 aa)) lie on the Stromal side of the membrane.

Belongs to the PGR5 family. Homodimer and heterodimer with PGR5. Interacts with PGR5, FD2, petC, psaD1, LFNR1 and LFNR2. Also interacts with a Fe-containing cofactor (FCC). In terms of processing, disulfide bonds; Cys-300 and Cys-303 are probably involved in the formation of disulfide bridges with 'Cys-11' and 'Cys-105' of PGR5 while Cys-272 and Cys-275 are probably involved in the binding of a Fe-containing cofactor (FCC).

Its subcellular location is the plastid. The protein localises to the chloroplast thylakoid membrane. Inhibited by antimycin A. Its function is as follows. Ferredoxin-plastoquinone reductase involved in cyclic electron flow (CEF) around photosystem I. The homodimer is probably not involved in CEF. This chain is PGR5-like protein 1A, chloroplastic (PGRL1A), found in Arabidopsis thaliana (Mouse-ear cress).